Consider the following 210-residue polypeptide: Adenylate kinase (210 aa).

Gly10–Thr15 provides a ligand contact to ATP. The tract at residues Ser30–Val59 is NMP. Residues Thr31, Arg36, Gln57–Val59, Gly85–Arg88, and Gln92 each bind AMP. Residues Gly121–Asp158 form an LID region. An ATP-binding site is contributed by Arg122. Zn(2+)-binding residues include Cys125 and Cys128. Residue Ile131–Phe132 coordinates ATP. Zn(2+) is bound by residues Cys145 and Cys148. Positions 155 and 166 each coordinate AMP. Residue Lys194 coordinates ATP.

Belongs to the adenylate kinase family. Monomer.

It is found in the cytoplasm. The catalysed reaction is AMP + ATP = 2 ADP. It functions in the pathway purine metabolism; AMP biosynthesis via salvage pathway; AMP from ADP: step 1/1. Its function is as follows. Catalyzes the reversible transfer of the terminal phosphate group between ATP and AMP. Plays an important role in cellular energy homeostasis and in adenine nucleotide metabolism. This chain is Adenylate kinase, found in Borrelia turicatae (strain 91E135).